The chain runs to 77 residues: uncharacterized protein (77 aa).

Positions 1 to 77 constitute a Peptidase A1 domain; sequence MAFERQGKIE…VAILDGKLVW (77 aa).

This is an uncharacterized protein from Saccharomyces cerevisiae (strain ATCC 204508 / S288c) (Baker's yeast).